The chain runs to 216 residues: UPF0323 lipoprotein HPAG1_0235 (216 aa).

Residues 1 to 27 form the signal peptide; the sequence is MKKPYRKISDYAIVGGLSALVMVSIVG. A lipid anchor (N-palmitoyl cysteine) is attached at Cys-28. Cys-28 carries the S-diacylglycerol cysteine lipid modification. Over residues 159-196 the composition is skewed to polar residues; that stretch reads QRTYKSPQAYQRSQNSFSKSAPSASGMGTASKGQSGFF. A disordered region spans residues 159-216; that stretch reads QRTYKSPQAYQRSQNSFSKSAPSASGMGTASKGQSGFFGSSRPTSSPAVSSGTRGFNA. A compositionally biased stretch (low complexity) spans 198–209; that stretch reads SSRPTSSPAVSS.

Belongs to the UPF0323 family.

Its subcellular location is the cell membrane. The chain is UPF0323 lipoprotein HPAG1_0235 from Helicobacter pylori (strain HPAG1).